The following is an 811-amino-acid chain: MGNMLKGEGPGPLPPLLQQYVELRDRYPDYLLLFQVGDFYECFGEDAERLARALGLVLTHKTSKDFTTPMAGIPIRAFDAYAERLLKMGFRLAVADQVEPAEEAEGLVRREVTQLLTPGTLTQEALLPREANYLAAIATGDGWGLAFLDVSTGEFKGTLLKSKSALYDELFRHRPAEVLLAPELRENEAFVAEFRKRFPVMLSEAPFEPQGEGPLALRRAQGALLAYARATQGGALSVRPFRLYDPGAFVRLPEASLKALEVFEPLRGQDTLFGVLDETRTAPGRRLLQAWLRHPLLERGPLEARLDRVERFVREGALREGVRRLLFRLADLERLATRLELSRASPRDLAALRRSLEILPELKGLLGEEVGLPDLSGLLEELRAALVEDPPLKVSEGGLIREGYDPDLDALRRAHAEGVAYFLDLEAREKERTGIPTLKVGYNAVFGYYLEVTRPYYEKVPQEYRPVQTLKDRQRYTLPEMKERERELYRLEALIKRREEEVFLALRERARKEAEALREAARILAELDVYAALAEVAVRHGYTRPRFGERLRIRAGRHPVVERRTAFVPNDLEMAHELVLVTGPNMAGKSTFLRQTALIALLAQIGSFVPAEEAELPLFDGIYTRIGASDDLAGGKSTFMVEMEEVALVLKEATERSLVLLDEVGRGTSSLDGVAIATALAEALHERRCYTLFATHYFELTALALPRLKNLHVAAKEEEGGLVFYHQVLPGPASKSYGVEVAEMAGLPKEVVERARALLSAMAARREGALEEVLERLLALDPDRLTPLEALRFLHELKALALGLPLGSMKG.

Residue 583–590 (GPNMAGKS) coordinates ATP.

Belongs to the DNA mismatch repair MutS family.

This protein is involved in the repair of mismatches in DNA. It is possible that it carries out the mismatch recognition step. This protein has a weak ATPase activity. This Thermus thermophilus (strain ATCC BAA-163 / DSM 7039 / HB27) protein is DNA mismatch repair protein MutS.